An 856-amino-acid polypeptide reads, in one-letter code: DNA mismatch repair protein MutS (856 aa).

618–625 (GPNMGGKS) provides a ligand contact to ATP.

The protein belongs to the DNA mismatch repair MutS family.

This protein is involved in the repair of mismatches in DNA. It is possible that it carries out the mismatch recognition step. This protein has a weak ATPase activity. The protein is DNA mismatch repair protein MutS of Shewanella baltica (strain OS195).